Here is a 256-residue protein sequence, read N- to C-terminus: L-erythrulose-1-phosphate isomerase (256 aa).

Catalysis depends on H96, which acts as the Electrophile. Residue E169 is the Proton acceptor of the active site. Residues G175 and S212 each coordinate substrate.

Belongs to the triosephosphate isomerase family. As to quaternary structure, homodimer.

The protein localises to the cytoplasm. It carries out the reaction L-erythrulose 1-phosphate = D-erythrulose 4-phosphate. The protein operates within carbohydrate metabolism; erythritol degradation. In terms of biological role, catalyzes the isomerization of D-erythrulose-4P to L-erythrulose-1P. The polypeptide is L-erythrulose-1-phosphate isomerase (Brucella melitensis biotype 1 (strain ATCC 23456 / CCUG 17765 / NCTC 10094 / 16M)).